The sequence spans 240 residues: Lectin (240 aa).

The Mn(2+) site is built by glutamate 127 and aspartate 129. The Ca(2+) site is built by aspartate 129, tyrosine 131, asparagine 133, and aspartate 138. 2 residues coordinate Mn(2+): aspartate 138 and histidine 143.

The protein belongs to the leguminous lectin family. Heterotetramer of two alpha and two beta chains; disulfide bond linked.

Binds preferentially to oligosaccharides bearing the sequence Man-alpha-1-&gt;2 Man-alpha-1-&gt;6 Man-alpha-1-&gt;6Man found in early steps of glycoprotein processing in the endoplasmic reticulum. It binds weakly to highly processed oligosaccharide structures. This chain is Lectin, found in Leucomphalos mildbraedii (Bowringia mildbraedii).